The chain runs to 233 residues: Orotidine 5'-phosphate decarboxylase (233 aa).

Substrate is bound by residues D9, K31, 58-67 (DLKLHDIPNT), T120, R182, Q191, G211, and R212. The Proton donor role is filled by K60.

It belongs to the OMP decarboxylase family. Type 1 subfamily. In terms of assembly, homodimer.

It carries out the reaction orotidine 5'-phosphate + H(+) = UMP + CO2. The protein operates within pyrimidine metabolism; UMP biosynthesis via de novo pathway; UMP from orotate: step 2/2. Catalyzes the decarboxylation of orotidine 5'-monophosphate (OMP) to uridine 5'-monophosphate (UMP). This Listeria monocytogenes serotype 4b (strain CLIP80459) protein is Orotidine 5'-phosphate decarboxylase.